Here is a 258-residue protein sequence, read N- to C-terminus: Acetylglutamate kinase (258 aa).

Substrate is bound by residues 44 to 45, R66, and N158; that span reads GG. ATP is bound by residues 181–186 and 209–211; these read DVSGIL and IIT.

The protein belongs to the acetylglutamate kinase family. ArgB subfamily. Homodimer.

It localises to the cytoplasm. The enzyme catalyses N-acetyl-L-glutamate + ATP = N-acetyl-L-glutamyl 5-phosphate + ADP. The protein operates within amino-acid biosynthesis; L-arginine biosynthesis; N(2)-acetyl-L-ornithine from L-glutamate: step 2/4. In terms of biological role, catalyzes the ATP-dependent phosphorylation of N-acetyl-L-glutamate. In Escherichia coli O157:H7, this protein is Acetylglutamate kinase.